The primary structure comprises 396 residues: Elongation factor Tu (396 aa).

Residues Lys10–Val205 enclose the tr-type G domain. The segment at Gly19–Thr26 is G1. Position 19-26 (Gly19–Thr26) interacts with GTP. A Mg(2+)-binding site is contributed by Thr26. Positions Gly62 to Asn66 are G2. Residues Asp83–Gly86 form a G3 region. GTP is bound by residues Asp83–His87 and Asn138–Asp141. The tract at residues Asn138–Asp141 is G4. Residues Ser175 to Leu177 are G5.

It belongs to the TRAFAC class translation factor GTPase superfamily. Classic translation factor GTPase family. EF-Tu/EF-1A subfamily. As to quaternary structure, monomer.

It localises to the cytoplasm. It catalyses the reaction GTP + H2O = GDP + phosphate + H(+). GTP hydrolase that promotes the GTP-dependent binding of aminoacyl-tRNA to the A-site of ribosomes during protein biosynthesis. The polypeptide is Elongation factor Tu (Rhodococcus jostii (strain RHA1)).